Reading from the N-terminus, the 276-residue chain is MAIKTYKPYTPSRRYITGLSSEDITAKPSVRSLLVKLPAHAGRNSYGRITSRHKEAGAKKLYRIIDFKRRKFGIEGKVEAIEYDPYRNCRIALIAYKDGEKRYILQPRGLSVGDIVAAAESGLDIKPGNAMKLKNIPVGTIVHNVELKPGKGGQMIRSAGAYAQLMGKEEKYVILRLASGEMRQVLAECMASIGEVGNEEWANVTIGKAGRNRHRGIRPQTRGSAMNPVDHPHGGGEGKKNSGRHPVTPWGKPTKGAKTRRKKASDKLIISRRKGK.

The tract at residues 210–276 (GRNRHRGIRP…KLIISRRKGK (67 aa)) is disordered. A compositionally biased stretch (basic and acidic residues) spans 230 to 240 (DHPHGGGEGKK). Basic residues predominate over residues 255-276 (KGAKTRRKKASDKLIISRRKGK).

Belongs to the universal ribosomal protein uL2 family. Part of the 50S ribosomal subunit. Forms a bridge to the 30S subunit in the 70S ribosome.

One of the primary rRNA binding proteins. Required for association of the 30S and 50S subunits to form the 70S ribosome, for tRNA binding and peptide bond formation. It has been suggested to have peptidyltransferase activity; this is somewhat controversial. Makes several contacts with the 16S rRNA in the 70S ribosome. The sequence is that of Large ribosomal subunit protein uL2 from Campylobacter jejuni subsp. jejuni serotype O:6 (strain 81116 / NCTC 11828).